Here is a 63-residue protein sequence, read N- to C-terminus: MGSFSMWHWLIVLVIVLLLFGRGKIPELMGDVAKGIKSFKKGMTDEDAPDTAKTVDHKADETK.

Residues 1–21 (MGSFSMWHWLIVLVIVLLLFG) form a helical membrane-spanning segment. The interval 42 to 63 (GMTDEDAPDTAKTVDHKADETK) is disordered. Residues 53–63 (KTVDHKADETK) show a composition bias toward basic and acidic residues.

This sequence belongs to the TatA/E family. The Tat system comprises two distinct complexes: a TatABC complex, containing multiple copies of TatA, TatB and TatC subunits, and a separate TatA complex, containing only TatA subunits. Substrates initially bind to the TatABC complex, which probably triggers association of the separate TatA complex to form the active translocon.

It localises to the cell inner membrane. Its function is as follows. Part of the twin-arginine translocation (Tat) system that transports large folded proteins containing a characteristic twin-arginine motif in their signal peptide across membranes. TatA could form the protein-conducting channel of the Tat system. The chain is Sec-independent protein translocase protein TatA from Rhizobium leguminosarum bv. trifolii (strain WSM2304).